A 117-amino-acid chain; its full sequence is Large ribosomal subunit protein uL18 (117 aa).

Belongs to the universal ribosomal protein uL18 family. In terms of assembly, part of the 50S ribosomal subunit; part of the 5S rRNA/L5/L18/L25 subcomplex. Contacts the 5S and 23S rRNAs.

This is one of the proteins that bind and probably mediate the attachment of the 5S RNA into the large ribosomal subunit, where it forms part of the central protuberance. The sequence is that of Large ribosomal subunit protein uL18 from Haemophilus ducreyi (strain 35000HP / ATCC 700724).